Here is a 668-residue protein sequence, read N- to C-terminus: Fructose-1,6-bisphosphatase class 3 (668 aa).

It belongs to the FBPase class 3 family. Mn(2+) serves as cofactor.

It catalyses the reaction beta-D-fructose 1,6-bisphosphate + H2O = beta-D-fructose 6-phosphate + phosphate. The protein operates within carbohydrate biosynthesis; gluconeogenesis. This is Fructose-1,6-bisphosphatase class 3 from Clostridium botulinum (strain Kyoto / Type A2).